The chain runs to 289 residues: ATP synthase gamma chain (289 aa).

This sequence belongs to the ATPase gamma chain family. In terms of assembly, F-type ATPases have 2 components, CF(1) - the catalytic core - and CF(0) - the membrane proton channel. CF(1) has five subunits: alpha(3), beta(3), gamma(1), delta(1), epsilon(1). CF(0) has three main subunits: a, b and c.

The protein localises to the cell inner membrane. Functionally, produces ATP from ADP in the presence of a proton gradient across the membrane. The gamma chain is believed to be important in regulating ATPase activity and the flow of protons through the CF(0) complex. This is ATP synthase gamma chain from Haemophilus influenzae (strain PittGG).